The following is a 285-amino-acid chain: Chemotaxis protein LafT (285 aa).

Transmembrane regions (helical) follow at residues 4–23 (FLGV…WAGG), 34–51 (FLII…GNPP), 171–191 (ALPG…MQAI), and 201–222 (HVAA…GLDP). Residues 223-285 (LSNAMAQRVK…MEKWLAEQEG (63 aa)) lie on the Cytoplasmic side of the membrane.

The protein belongs to the MotA family.

The protein resides in the cell inner membrane. Its function is as follows. Required for rotation of the flagellar motor. Probable transmembrane proton channel. This is Chemotaxis protein LafT (lafT) from Vibrio parahaemolyticus serotype O3:K6 (strain RIMD 2210633).